A 261-amino-acid polypeptide reads, in one-letter code: Large ribosomal subunit protein uL2 (261 aa).

The tract at residues 207–233 is disordered; sequence VEHPHGGGNHQHIGKASTVKRGTPPGR.

It belongs to the universal ribosomal protein uL2 family.

It localises to the cytoplasm. This is Large ribosomal subunit protein uL2 (RpL8) from Aedes albopictus (Asian tiger mosquito).